We begin with the raw amino-acid sequence, 606 residues long: Transmembrane 9 superfamily member 1 (606 aa).

A signal peptide spans 1–27; that stretch reads MTVLGHPRSWSCRWWPLLLLLLLTGRE. N-linked (GlcNAc...) asparagine glycosylation is present at Asn178. 4 helical membrane-spanning segments follow: residues 237-257, 310-330, 339-359, and 373-393; these read LSIINSMVLVFLLVGFVAVIL, VLGVGAQFLALGTGIIVMALL, GAINSAAILLYALTCCISGYV, and VWNIILTTSLFSVPFFLTWSV. Asn401 carries N-linked (GlcNAc...) asparagine glycosylation. Helical transmembrane passes span 412–432, 469–489, 499–519, and 535–555; these read ILLLLTVWLLVGFPLTVIGGI, VGGFLPFSAISVELYYIFATV, GILFFVFAILLSVGACISIAL, and SVLSVGSTGLFIFLYSVFYYA. Residue Asn559 is glycosylated (N-linked (GlcNAc...) asparagine). A helical membrane pass occupies residues 570-590; that stretch reads FGYSLLTGYVFFLMLGTISFF.

Belongs to the nonaspanin (TM9SF) (TC 9.A.2) family.

Its subcellular location is the lysosome membrane. It localises to the cytoplasmic vesicle. The protein localises to the autophagosome membrane. Plays an essential role in autophagy. In Bos taurus (Bovine), this protein is Transmembrane 9 superfamily member 1 (TM9SF1).